A 250-amino-acid chain; its full sequence is Tetrathionate reductase subunit B (250 aa).

Positions 1 to 33 (MWTGVNMDSSKRQFLQQLGVLTAGASLVPLAEA) form a signal peptide, tat-type signal. 3 4Fe-4S ferredoxin-type domains span residues 50 to 79 (YAMLIDLRRCIGCQSCTVSCTIENQTPQGA), 97 to 128 (VTNVLLPRLCNHCDNPPCVPVCPVQATFQRED), and 129 to 158 (GIVVVDNKRCVGCAYCVQACPYDARFINHE). [4Fe-4S] cluster-binding residues include Cys-59, Cys-62, Cys-65, Cys-69, Cys-106, Cys-109, Cys-114, Cys-118, Cys-138, Cys-141, Cys-144, Cys-148, Cys-165, Cys-168, Cys-180, and Cys-184.

As to quaternary structure, probably composed of three subunits: TtrA, TtrB and TtrC. Post-translationally, predicted to be exported by the Tat system. The position of the signal peptide cleavage has not been experimentally proven.

The protein localises to the periplasm. It localises to the cell inner membrane. Functionally, part of a membrane-bound tetrathionate reductase that catalyzes the reduction of tetrathionate to thiosulfate. TtrB is probably involved in transfer of electrons from TtrC to TtrA. During mice infection, the ability to use tetrathionate as an electron acceptor is a growth advantage for S.typhimurium over the competing microbiota in the lumen of the inflamed gut. The polypeptide is Tetrathionate reductase subunit B (ttrB) (Salmonella typhimurium (strain LT2 / SGSC1412 / ATCC 700720)).